We begin with the raw amino-acid sequence, 418 residues long: Gamma-glutamyl phosphate reductase (418 aa).

It belongs to the gamma-glutamyl phosphate reductase family.

Its subcellular location is the cytoplasm. It catalyses the reaction L-glutamate 5-semialdehyde + phosphate + NADP(+) = L-glutamyl 5-phosphate + NADPH + H(+). It participates in amino-acid biosynthesis; L-proline biosynthesis; L-glutamate 5-semialdehyde from L-glutamate: step 2/2. Catalyzes the NADPH-dependent reduction of L-glutamate 5-phosphate into L-glutamate 5-semialdehyde and phosphate. The product spontaneously undergoes cyclization to form 1-pyrroline-5-carboxylate. The protein is Gamma-glutamyl phosphate reductase of Pelodictyon phaeoclathratiforme (strain DSM 5477 / BU-1).